Here is a 425-residue protein sequence, read N- to C-terminus: Histidine--tRNA ligase 1 (425 aa).

The protein belongs to the class-II aminoacyl-tRNA synthetase family. In terms of assembly, homodimer.

Its subcellular location is the cytoplasm. The enzyme catalyses tRNA(His) + L-histidine + ATP = L-histidyl-tRNA(His) + AMP + diphosphate + H(+). The chain is Histidine--tRNA ligase 1 from Bacillus anthracis.